The following is an 827-amino-acid chain: Probable beta-glucosidase H (827 aa).

Asp223 is a catalytic residue. Positions 387–546 (RLLTNAVMHF…DSAEMVRSAV (160 aa)) constitute a PA14 domain. 4 N-linked (GlcNAc...) asparagine glycosylation sites follow: Asn471, Asn594, Asn600, and Asn625.

Belongs to the glycosyl hydrolase 3 family.

Its subcellular location is the secreted. It catalyses the reaction Hydrolysis of terminal, non-reducing beta-D-glucosyl residues with release of beta-D-glucose.. It functions in the pathway glycan metabolism; cellulose degradation. Functionally, beta-glucosidases are one of a number of cellulolytic enzymes involved in the degradation of cellulosic biomass. Catalyzes the last step releasing glucose from the inhibitory cellobiose. The polypeptide is Probable beta-glucosidase H (bglH) (Aspergillus flavus (strain ATCC 200026 / FGSC A1120 / IAM 13836 / NRRL 3357 / JCM 12722 / SRRC 167)).